We begin with the raw amino-acid sequence, 301 residues long: Phosducin-like protein (301 aa).

T2 bears the N-acetylthreonine mark. Positions 18–57 (SSSEDEDSDHEDKDRGRCAPASSSVPAEAELAGEGISVNT) are disordered. Residues S20 and S25 each carry the phosphoserine modification. A compositionally biased stretch (low complexity) spans 36–49 (APASSSVPAEAELA). The Phosducin domain occupies 36–299 (APASSSVPAE…TCHSEDSDLE (264 aa)). Residues S226, S293, and S296 each carry the phosphoserine modification.

This sequence belongs to the phosducin family. As to quaternary structure, forms a complex with the beta and gamma subunits of the GTP-binding protein, transducin. Interacts with the CCT chaperonin complex.

It localises to the cell projection. Its subcellular location is the cilium. Acts as a positive regulator of hedgehog signaling and regulates ciliary function. Its function is as follows. Functions as a co-chaperone for CCT in the assembly of heterotrimeric G protein complexes, facilitates the assembly of both Gbeta-Ggamma and RGS-Gbeta5 heterodimers. In terms of biological role, acts as a negative regulator of heterotrimeric G proteins assembly by trapping the preloaded G beta subunits inside the CCT chaperonin. The polypeptide is Phosducin-like protein (PDCL) (Homo sapiens (Human)).